Reading from the N-terminus, the 150-residue chain is Ribonuclease K6 (150 aa).

A signal peptide spans 1–23; the sequence is MVLCFPLLLLLLVLWGPVCPLHA. Histidine 38 (proton acceptor) is an active-site residue. 4 disulfides stabilise this stretch: cysteine 46–cysteine 104, cysteine 60–cysteine 114, cysteine 78–cysteine 129, and cysteine 85–cysteine 92. The N-linked (GlcNAc...) asparagine glycan is linked to asparagine 55. Substrate contacts are provided by residues 61-65 and lysine 86; that span reads KHQNT. Residue asparagine 100 is glycosylated (N-linked (GlcNAc...) asparagine). A substrate-binding site is contributed by arginine 105. Histidine 145 acts as the Proton donor in catalysis.

Belongs to the pancreatic ribonuclease family. Interacts (via N-terminus) with bacterial lipopolysaccharide (LPS).

It is found in the secreted. The protein resides in the lysosome. Its subcellular location is the cytoplasmic granule. In terms of biological role, ribonuclease which shows a preference for the pyrimidines uridine and cytosine. Has potent antibacterial activity against a range of Gram-positive and Gram-negative bacteria, including P.aeruginosa, A.baumanii, M.luteus, S.aureus, E.faecalis, E.faecium, S.saprophyticus and E.coli. Causes loss of bacterial membrane integrity, and also promotes agglutination of Gram-negative bacteria. Probably contributes to urinary tract sterility. Bactericidal activity is independent of RNase activity. In Gorilla gorilla gorilla (Western lowland gorilla), this protein is Ribonuclease K6 (RNASE6).